The sequence spans 796 residues: Protein translocase subunit SecA 2 (796 aa).

ATP is bound by residues Gln-84, 102–106 (GEGKT), and Asp-496.

It belongs to the SecA family. In terms of assembly, monomer and homodimer. Part of the essential Sec protein translocation apparatus which comprises SecA, SecYEG and auxiliary proteins SecDF. Other proteins may also be involved.

The protein localises to the cell membrane. Its subcellular location is the cytoplasm. The catalysed reaction is ATP + H2O + cellular proteinSide 1 = ADP + phosphate + cellular proteinSide 2.. In terms of biological role, part of the Sec protein translocase complex. Interacts with the SecYEG preprotein conducting channel. Has a central role in coupling the hydrolysis of ATP to the transfer of proteins into and across the cell membrane, serving as an ATP-driven molecular motor driving the stepwise translocation of polypeptide chains across the membrane. The protein is Protein translocase subunit SecA 2 of Staphylococcus aureus (strain MRSA252).